The chain runs to 565 residues: UV-stimulated scaffold protein A homolog (565 aa).

Residues 11-156 form a VHS-like region; the sequence is RKNLNRILQE…VTLRKTKFVD (146 aa). Residues 155–215 adopt a coiled-coil conformation; the sequence is VDYENGEKKI…ELETTMEMLV (61 aa). The segment at 441-468 adopts a UVSSA-type zinc-finger fold; that stretch reads DRECLAKLPSGALCKRKDMFKCPLHGPL. Residues Cys444, Cys454, Cys462, and His465 each contribute to the Zn(2+) site. Positions 480 to 510 form a coiled coil; sequence DEDRLKEIDRKERKRLKEAEEFSRKIVKEYE. Disordered regions lie at residues 510–530 and 542–565; these read ESKTKRKRKHEEETSVRSRLQ and VSADITSQQRSRLEKNFSHQFSHL.

This sequence belongs to the UVSSA family.

It localises to the chromosome. Factor involved in transcription-coupled nucleotide excision repair (TC-NER) in response to UV damage. TC-NER allows RNA polymerase II-blocking lesions to be rapidly removed from the transcribed strand of active genes. The sequence is that of UV-stimulated scaffold protein A homolog from Caenorhabditis briggsae.